The sequence spans 372 residues: Glutamate 5-kinase (372 aa).

ATP is bound at residue K14. Substrate contacts are provided by S54, D141, and N153. 173–174 (TD) serves as a coordination point for ATP. Residues 280–358 (RGRVVIDGGA…SEIESVLGHL (79 aa)) form the PUA domain.

This sequence belongs to the glutamate 5-kinase family.

It is found in the cytoplasm. The enzyme catalyses L-glutamate + ATP = L-glutamyl 5-phosphate + ADP. It functions in the pathway amino-acid biosynthesis; L-proline biosynthesis; L-glutamate 5-semialdehyde from L-glutamate: step 1/2. Its function is as follows. Catalyzes the transfer of a phosphate group to glutamate to form L-glutamate 5-phosphate. The sequence is that of Glutamate 5-kinase from Cupriavidus taiwanensis (strain DSM 17343 / BCRC 17206 / CCUG 44338 / CIP 107171 / LMG 19424 / R1) (Ralstonia taiwanensis (strain LMG 19424)).